The following is a 132-amino-acid chain: Small ribosomal subunit protein uS11 (132 aa).

This sequence belongs to the universal ribosomal protein uS11 family. As to quaternary structure, part of the 30S ribosomal subunit. Interacts with proteins S7 and S18. Binds to IF-3.

In terms of biological role, located on the platform of the 30S subunit, it bridges several disparate RNA helices of the 16S rRNA. Forms part of the Shine-Dalgarno cleft in the 70S ribosome. In Alkaliphilus metalliredigens (strain QYMF), this protein is Small ribosomal subunit protein uS11.